Here is a 571-residue protein sequence, read N- to C-terminus: Cytochrome P450 monooxygenase g430 (571 aa).

Residues 8 to 28 traverse the membrane as a helical segment; the sequence is GALIWVVTSYILYAIISNFII. C471 is a binding site for heme. A disordered region spans residues 552–571; that stretch reads CPLPAEAKLPKSRKPIGTAS.

It belongs to the cytochrome P450 family. Heme serves as cofactor.

It localises to the membrane. Its pathway is mycotoxin biosynthesis. In terms of biological role, cytochrome P450 monooxygenase; part of the gene cluster that mediates the biosynthesis of 1233A, a natural compound known as an inhibitor of HMG-CoA synthase in the mevalonate pathway and with antibacterial and antifungal activities. The highly reducing polyketide synthase g433 is responsible for the 1233A backbone biosynthesis and the cytochrome P450 monooxygenase g430 catalyzes oxidation of the backbone. The chain is Cytochrome P450 monooxygenase g430 from Fusarium sp.